The sequence spans 154 residues: MFTQANLFLVLLLVIALIAKNNSLILAVSVLIGIKLIGLDQKIFPVLQSKGINWGVTVITIAVLVPIATGDIGFKQLGEAVKSSYAWIALGAGILVALIAKNGIVLLENDPHITTALVFGTILAVSLFKGVAVGPLIGAGIAYLAMQAVKFFSG.

The next 4 helical transmembrane spans lie at 8–28, 54–74, 87–107, and 117–137; these read FLVLLLVIALIAKNNSLILAV, WGVTVITIAVLVPIATGDIGF, WIALGAGILVALIAKNGIVLL, and LVFGTILAVSLFKGVAVGPLI.

The protein belongs to the UPF0756 family.

The protein resides in the cell membrane. The sequence is that of UPF0756 membrane protein BPUM_2558 from Bacillus pumilus (strain SAFR-032).